The primary structure comprises 493 residues: Neuronal pentraxin receptor (493 aa).

Residues 1–2 are Cytoplasmic-facing; that stretch reads MK. A helical; Signal-anchor for type II membrane protein transmembrane segment spans residues 3 to 23; it reads FLAVLLAAGMLAFLGAVICII. Residues 24–493 are Extracellular-facing; the sequence is ASVPLAASPA…FDVCKGRAKA (470 aa). A disordered region spans residues 37–72; that stretch reads PGGTDNASAASAAGGSGPQRSLSALHSAGGSAGPSV. N42 carries N-linked (GlcNAc...) asparagine glycosylation. The segment covering 57-72 has biased composition (low complexity); the sequence is SLSALHSAGGSAGPSV. Residue N211 is glycosylated (N-linked (GlcNAc...) asparagine). In terms of domain architecture, Pentraxin (PTX) spans 285–487; that stretch reads DAFKVSIPIR…GAKKAAFDVC (203 aa). C315 and C376 are joined by a disulfide. Residues N340, E418, Q419, D420, and Q430 each coordinate Ca(2+). N-linked (GlcNAc...) asparagine glycosylation is present at N456.

As to quaternary structure, heteropentamer with NPTX1 and/or NPTX2. Also binds taipoxin-associated calcium-binding protein 49 (TCBP49/RCN2). Interacts with KLHL2. It depends on Ca(2+) as a cofactor. Post-translationally, ubiquitinated by a cullin-RING-based BCR (BTB-CUL3-RBX1) E3 ubiquitin-protein ligase complex containing KLHL2.

The protein localises to the membrane. May be involved in mediating uptake of synaptic material during synapse remodeling or in mediating the synaptic clustering of AMPA glutamate receptors at a subset of excitatory synapses. The sequence is that of Neuronal pentraxin receptor (Nptxr) from Mus musculus (Mouse).